A 125-amino-acid polypeptide reads, in one-letter code: Fumarate reductase subunit D (125 aa).

Helical transmembrane passes span 30–50 (FAML…LGVI), 62–82 (AFAT…LPMW), and 105–125 (VACY…IFMI).

This sequence belongs to the FrdD family. In terms of assembly, part of an enzyme complex containing four subunits: a flavoprotein (FrdA), an iron-sulfur protein (FrdB), and two hydrophobic anchor proteins (FrdC and FrdD).

Its subcellular location is the cell inner membrane. Its function is as follows. Anchors the catalytic components of the fumarate reductase complex to the cell membrane, binds quinones. This is Fumarate reductase subunit D from Vibrio parahaemolyticus serotype O3:K6 (strain RIMD 2210633).